A 515-amino-acid chain; its full sequence is Nuclear hormone receptor family member nhr-62 (515 aa).

The nuclear receptor DNA-binding region spans 95 to 170 (NLVCVVCGDQ…AGMNPRAVQS (76 aa)). 2 NR C4-type zinc fingers span residues 98-118 (CVVC…CNGC) and 134-153 (CRFE…CRAC). Positions 169-195 (QSERVEREQNGSPNQIEEDDYKDLSSP) are disordered. The NR LBD domain maps to 225–509 (EMAKLSEQIV…YLCHEVQFIQ (285 aa)). The AF-2 stretch occupies residues 498–509 (SEYLCHEVQFIQ).

It belongs to the nuclear hormone receptor family. As to expression, widely expressed at a low level in many tissues including the pharynx, sensory neurons, intestine, spermatheca, hypodermis, and excretory cell.

It is found in the nucleus. Functionally, orphan nuclear hormone receptor. Required for metabolic and physiologic responses associated with dietary-restriction-induced longevity. Modulates triglyceride and lipid metabolism and autophagy, associated with dietary-restriction, probably acting via regulation of transcription of target genes. This Caenorhabditis elegans protein is Nuclear hormone receptor family member nhr-62 (nhr-62).